Here is a 159-residue protein sequence, read N- to C-terminus: MSQFTHINASGEANMVDVSAKAETVREARAEAFVQMSAETLELIVSGSHHKGDVFATARIAGIQAAKKTWDLIPLCHPLLLTKVEVQLEAIESENKVRIESVCKLAGKTGVEMEALTAASVAALTIYDMCKAVQKDIVIENVRLLEKTGGKSGHFKVES.

Substrate-binding positions include 75-77 (LCH) and 113-114 (ME). Asp128 is an active-site residue.

The protein belongs to the MoaC family. As to quaternary structure, homohexamer; trimer of dimers.

It catalyses the reaction (8S)-3',8-cyclo-7,8-dihydroguanosine 5'-triphosphate = cyclic pyranopterin phosphate + diphosphate. The protein operates within cofactor biosynthesis; molybdopterin biosynthesis. Catalyzes the conversion of (8S)-3',8-cyclo-7,8-dihydroguanosine 5'-triphosphate to cyclic pyranopterin monophosphate (cPMP). The polypeptide is Cyclic pyranopterin monophosphate synthase (Vibrio atlanticus (strain LGP32) (Vibrio splendidus (strain Mel32))).